A 1402-amino-acid chain; its full sequence is Nuclear pore complex protein Nup160 (1402 aa).

4 positions are modified to phosphoserine: serine 10, serine 456, serine 915, and serine 1123.

As to quaternary structure, part of the nuclear pore complex (NPC). Forms part of the NUP160 subcomplex in the nuclear pore which is composed of NUP160, NUP133, NUP107 and NUP96. This complex plays a role in RNA export and in tethering NUP98 and NUP153 to the nucleus.

It localises to the nucleus. The protein localises to the nuclear pore complex. Its function is as follows. Functions as a component of the nuclear pore complex (NPC). Involved in poly(A)+ RNA transport. This Mus musculus (Mouse) protein is Nuclear pore complex protein Nup160 (Nup160).